The primary structure comprises 273 residues: Large ribosomal subunit protein uL2cz/uL2cy (273 aa).

Disordered regions lie at residues 1-22 and 223-254; these read MAIH…DSQV and MNPV…PALG.

Belongs to the universal ribosomal protein uL2 family. In terms of assembly, part of the 50S ribosomal subunit.

The protein resides in the plastid. The protein localises to the chloroplast. This Drimys granadensis protein is Large ribosomal subunit protein uL2cz/uL2cy (rpl2-A).